The following is a 131-amino-acid chain: Holo-[acyl-carrier-protein] synthase (131 aa).

Positions 8 and 59 each coordinate Mg(2+).

It belongs to the P-Pant transferase superfamily. AcpS family. Mg(2+) is required as a cofactor.

It is found in the cytoplasm. The enzyme catalyses apo-[ACP] + CoA = holo-[ACP] + adenosine 3',5'-bisphosphate + H(+). Transfers the 4'-phosphopantetheine moiety from coenzyme A to a Ser of acyl-carrier-protein. The sequence is that of Holo-[acyl-carrier-protein] synthase from Rickettsia conorii (strain ATCC VR-613 / Malish 7).